The primary structure comprises 314 residues: Methionyl-tRNA formyltransferase (314 aa).

(6S)-5,6,7,8-tetrahydrofolate is bound at residue 110–113; sequence SLLP.

It belongs to the Fmt family.

It carries out the reaction L-methionyl-tRNA(fMet) + (6R)-10-formyltetrahydrofolate = N-formyl-L-methionyl-tRNA(fMet) + (6S)-5,6,7,8-tetrahydrofolate + H(+). Its function is as follows. Attaches a formyl group to the free amino group of methionyl-tRNA(fMet). The formyl group appears to play a dual role in the initiator identity of N-formylmethionyl-tRNA by promoting its recognition by IF2 and preventing the misappropriation of this tRNA by the elongation apparatus. This Bacillus anthracis (strain A0248) protein is Methionyl-tRNA formyltransferase.